The following is a 394-amino-acid chain: MAAESNFVDYVKIYCRSGKGGRGSTHFRREKYIPKGGPDGGDGGRGGHVFLRGNRNYWTLLHLRYDRHIMATNGQSGGAKRSTGANGEDRIIEVPCGTAVYDADTGEFITDITEHGQQVMLLQGGRGGHGNTFFKTATNQAPRYAQPGEPAQERMVIMQLKMLADVGLVGFPNAGKSTLLSVLTAAKPKIANYPFTTLEPNLGIVAYRDKRSFVMADIPGIIEGASSGKGLGLRFLRHIERNALLLFMIPADTDNIAKEYEILSRELVAYNEELAQKRKVLAITKCDLIDEELCEMLREELPTGLPVVFISAVAQQGLEELKDTLWKELSKETLHEPDSIVRQALDLTSLTWDEEDDLFPASIEDDEDEEGLDDIDFDLEIEYDNEGDDAPDQL.

The 159-residue stretch at 5–163 (SNFVDYVKIY…RMVIMQLKML (159 aa)) folds into the Obg domain. Residues 26-45 (HFRREKYIPKGGPDGGDGGR) form a disordered region. Residues 164–330 (ADVGLVGFPN…LKDTLWKELS (167 aa)) enclose the OBG-type G domain. GTP-binding positions include 170-177 (GFPNAGKS), 195-199 (FTTLE), 217-220 (DIPG), 284-287 (TKCD), and 311-313 (SAV). Residues S177 and T197 each contribute to the Mg(2+) site.

This sequence belongs to the TRAFAC class OBG-HflX-like GTPase superfamily. OBG GTPase family. As to quaternary structure, monomer. Mg(2+) serves as cofactor.

Its subcellular location is the cytoplasm. Functionally, an essential GTPase which binds GTP, GDP and possibly (p)ppGpp with moderate affinity, with high nucleotide exchange rates and a fairly low GTP hydrolysis rate. Plays a role in control of the cell cycle, stress response, ribosome biogenesis and in those bacteria that undergo differentiation, in morphogenesis control. This is GTPase Obg from Porphyromonas gingivalis (strain ATCC 33277 / DSM 20709 / CIP 103683 / JCM 12257 / NCTC 11834 / 2561).